The chain runs to 266 residues: 5'-nucleotidase SurE (266 aa).

The a divalent metal cation site is built by Asp-8, Asp-9, Ser-39, and Asn-93.

It belongs to the SurE nucleotidase family. A divalent metal cation serves as cofactor.

It is found in the cytoplasm. The enzyme catalyses a ribonucleoside 5'-phosphate + H2O = a ribonucleoside + phosphate. Its function is as follows. Nucleotidase that shows phosphatase activity on nucleoside 5'-monophosphates. In Thermococcus gammatolerans (strain DSM 15229 / JCM 11827 / EJ3), this protein is 5'-nucleotidase SurE.